Consider the following 231-residue polypeptide: 6-hydroxymethyl-7,8-dihydropterin pyrophosphokinase (231 aa).

This sequence belongs to the archaeal 6-HMPDK family. The cofactor is Mg(2+).

It catalyses the reaction 6-hydroxymethyl-7,8-dihydropterin + ATP = (7,8-dihydropterin-6-yl)methyl diphosphate + AMP + H(+). Functionally, catalyzes the transfer of diphosphate from ATP to 6-hydroxymethyl-7,8-dihydropterin (6-HMD), leading to 6-hydroxymethyl-7,8-dihydropterin diphosphate (6-HMDP). To a lesser extent, can also use CTP, UTP, and GTP as the nucleotide triphosphate substrate. This is 6-hydroxymethyl-7,8-dihydropterin pyrophosphokinase from Pyrococcus furiosus (strain ATCC 43587 / DSM 3638 / JCM 8422 / Vc1).